The primary structure comprises 177 residues: Basic form of pathogenesis-related protein 1 (177 aa).

An N-terminal signal peptide occupies residues 1 to 23 (MGFLTTIVACFITFAILIHSSKA). Glutamine 24 is subject to Pyrrolidone carboxylic acid. Positions 31 to 147 (LNPHNAARRQ…NGWFFITCNY (117 aa)) constitute an SCP domain.

The protein belongs to the CRISP family. Two disulfide bonds are present.

Functionally, probably involved in the defense reaction of plants against pathogens. The sequence is that of Basic form of pathogenesis-related protein 1 from Nicotiana tabacum (Common tobacco).